We begin with the raw amino-acid sequence, 510 residues long: Sulfoquinovosyl transferase SQD2 (510 aa).

The transit peptide at 1 to 83 directs the protein to the chloroplast; the sequence is MTTLSSINLS…SNDMTITQVR (83 aa). A Phosphoserine modification is found at Ser-88. The helical transmembrane segment at 198–218 threads the bilayer; sequence PGVMVFGALAIAKMLSVPIVM.

The protein belongs to the glycosyltransferase group 1 family. Glycosyltransferase 4 subfamily.

Its subcellular location is the plastid. The protein localises to the chloroplast membrane. It carries out the reaction UDP-alpha-D-6-sulfoquinovose + a 1,2-diacyl-sn-glycerol = a 6-sulfo-alpha-D-quinovosyldiacylglycerol + UDP + H(+). The protein operates within glycolipid biosynthesis. Catalyzes the transfer of the sulfoquinovose moiety from UDP-sulfoquinovose to diacylglycerol during sulfolipid biosynthesis. Sulfolipid contributes to maintaining a negatively charged lipid-water interface, a requirement for proper function of photosynthetic membranes. Sulfolipid may also function as a substitute of anionic phospholipids under phosphate-limited growth conditions. The polypeptide is Sulfoquinovosyl transferase SQD2 (Arabidopsis thaliana (Mouse-ear cress)).